We begin with the raw amino-acid sequence, 270 residues long: Phosphatidylglycerol--prolipoprotein diacylglyceryl transferase (270 aa).

4 consecutive transmembrane segments (helical) span residues 19 to 39, 56 to 76, 92 to 112, and 116 to 136; these read FPVY…LWLA, LVLI…VIFE, QGGL…VLFA, and GLSF…GQAI. An a 1,2-diacyl-sn-glycero-3-phospho-(1'-sn-glycerol)-binding site is contributed by Arg-138. Transmembrane regions (helical) follow at residues 178–198, 206–226, and 236–256; these read HPTF…LLAL, GELF…VEGL, and LRIA…FIIV.

The protein belongs to the Lgt family.

The protein resides in the cell membrane. It carries out the reaction L-cysteinyl-[prolipoprotein] + a 1,2-diacyl-sn-glycero-3-phospho-(1'-sn-glycerol) = an S-1,2-diacyl-sn-glyceryl-L-cysteinyl-[prolipoprotein] + sn-glycerol 1-phosphate + H(+). The protein operates within protein modification; lipoprotein biosynthesis (diacylglyceryl transfer). Functionally, catalyzes the transfer of the diacylglyceryl group from phosphatidylglycerol to the sulfhydryl group of the N-terminal cysteine of a prolipoprotein, the first step in the formation of mature lipoproteins. This Bacillus cereus (strain ATCC 14579 / DSM 31 / CCUG 7414 / JCM 2152 / NBRC 15305 / NCIMB 9373 / NCTC 2599 / NRRL B-3711) protein is Phosphatidylglycerol--prolipoprotein diacylglyceryl transferase.